The primary structure comprises 686 residues: Translation initiation factor IF-2 (686 aa).

Positions 53 to 105 (EKPSVADEFEVEEKVVRSKKNSNKKKKKGKGNEDKRQENFAGRQQTQTVETPD) are disordered. Basic residues predominate over residues 69 to 81 (RSKKNSNKKKKKG). Residues 188–357 (ERPAVVTIMG…LLVSEVEEYK (170 aa)) form the tr-type G domain. The segment at 197–204 (GHVDHGKT) is G1. A GTP-binding site is contributed by 197 to 204 (GHVDHGKT). The G2 stretch occupies residues 222–226 (GITQH). Positions 243-246 (DTPG) are G3. Residues 243-247 (DTPGH) and 297-300 (NKMD) contribute to the GTP site. Positions 297–300 (NKMD) are G4. The segment at 333-335 (SAI) is G5.

Belongs to the TRAFAC class translation factor GTPase superfamily. Classic translation factor GTPase family. IF-2 subfamily.

The protein resides in the cytoplasm. In terms of biological role, one of the essential components for the initiation of protein synthesis. Protects formylmethionyl-tRNA from spontaneous hydrolysis and promotes its binding to the 30S ribosomal subunits. Also involved in the hydrolysis of GTP during the formation of the 70S ribosomal complex. This is Translation initiation factor IF-2 from Bacillus cereus (strain ATCC 10987 / NRS 248).